The primary structure comprises 124 residues: Glutaredoxin-2 (124 aa).

C13 and C16 are oxidised to a cystine.

Belongs to the glutaredoxin family. Homodimer.

The protein resides in the host cytoplasm. Functionally, glutaredoxin necessary for virion morphogenesis and virus replication. Functions as a thiol-disulfide transfer protein between membrane-associated OPG128 and substrates OPG095 or OPG053. The complete pathway for formation of disulfide bonds in intracellular virion membrane proteins sequentially involves oxidation of OPG072, OPG128 and OPG088. Exhibit thioltransferase and dehydroascorbate reductase activities in vitro. The sequence is that of Glutaredoxin-2 (OPG088) from Camelus.